Reading from the N-terminus, the 512-residue chain is Activin receptor type-2B (512 aa).

The N-terminal stretch at 1-24 (MSASWLTLAVLCATLGAGPGHGEA) is a signal peptide. At 25 to 137 (ETRECIYYNA…PPPPTPSLLN (113 aa)) the chain is on the extracellular side. Intrachain disulfides connect Cys29/Cys59, Cys49/Cys77, Cys84/Cys103, Cys90/Cys102, and Cys104/Cys109. 2 N-linked (GlcNAc...) asparagine glycosylation sites follow: Asn42 and Asn65. Residues 138-158 (ILVYSLLPIAVLSVAILLAFW) form a helical membrane-spanning segment. Topologically, residues 159 to 512 (MYRHRKPPYG…VDLPPKESSI (354 aa)) are cytoplasmic. The 289-residue stretch at 190–478 (LQLLEIKARG…LSAGCVEERI (289 aa)) folds into the Protein kinase domain. Residues 196-204 (KARGRFGCV) and Lys217 each bind ATP. The active-site Proton acceptor is the Asp321.

This sequence belongs to the protein kinase superfamily. TKL Ser/Thr protein kinase family. TGFB receptor subfamily. It depends on Mg(2+) as a cofactor. The cofactor is Mn(2+). As to expression, not expressed in hen anterior pituitary during the ovulatory cycle but expressed in the ovarian follicle.

Its subcellular location is the membrane. It carries out the reaction L-threonyl-[receptor-protein] + ATP = O-phospho-L-threonyl-[receptor-protein] + ADP + H(+). The enzyme catalyses L-seryl-[receptor-protein] + ATP = O-phospho-L-seryl-[receptor-protein] + ADP + H(+). Functionally, on ligand binding, forms a receptor complex consisting of two type II and two type I transmembrane serine/threonine kinases. Type II receptors phosphorylate and activate type I receptors which autophosphorylate, then bind and activate SMAD transcriptional regulators. Receptor for activin A, activin B and inhibin A. May modulate neuropeptide expression in dorsal root ganglia (DRG) neurons and ovarian follicle development. The protein is Activin receptor type-2B (ACVR2B) of Gallus gallus (Chicken).